We begin with the raw amino-acid sequence, 269 residues long: Octanoyltransferase LipM (269 aa).

The 209-residue stretch at 31–239 (NHGAPVLRFY…GFSEGFEVNF (209 aa)) folds into the BPL/LPL catalytic domain. Cysteine 141 (acyl-thioester intermediate) is an active-site residue.

The protein belongs to the octanoyltransferase LipM family. Monomer.

The enzyme catalyses octanoyl-[ACP] + L-lysyl-[protein] = N(6)-octanoyl-L-lysyl-[protein] + holo-[ACP] + H(+). It functions in the pathway protein modification; protein lipoylation via endogenous pathway; protein N(6)-(lipoyl)lysine from octanoyl-[acyl-carrier-protein]. Catalyzes the transfer of endogenously produced octanoic acid from octanoyl-acyl-carrier-protein onto the lipoyl domain of GcvH, an intermediate carrier during protein lipoylation. The chain is Octanoyltransferase LipM from Carboxydothermus hydrogenoformans (strain ATCC BAA-161 / DSM 6008 / Z-2901).